The sequence spans 92 residues: Small ribosomal subunit protein uS19 (92 aa).

The protein belongs to the universal ribosomal protein uS19 family.

Protein S19 forms a complex with S13 that binds strongly to the 16S ribosomal RNA. This Desulfatibacillum aliphaticivorans protein is Small ribosomal subunit protein uS19.